Consider the following 322-residue polypeptide: 1-aminocyclopropane-1-carboxylate oxidase 1 (322 aa).

A Fe2OG dioxygenase domain is found at 159-259 (PTFGTKVSSY…RMSIASFYNP (101 aa)). 3 residues coordinate Fe cation: His183, Asp185, and His240.

This sequence belongs to the iron/ascorbate-dependent oxidoreductase family. Fe cation is required as a cofactor.

It catalyses the reaction 1-aminocyclopropane-1-carboxylate + L-ascorbate + O2 = ethene + L-dehydroascorbate + hydrogen cyanide + CO2 + 2 H2O. It functions in the pathway alkene biosynthesis; ethylene biosynthesis via S-adenosyl-L-methionine; ethylene from S-adenosyl-L-methionine: step 2/2. This Oryza sativa subsp. japonica (Rice) protein is 1-aminocyclopropane-1-carboxylate oxidase 1 (ACO1).